A 706-amino-acid chain; its full sequence is Polyribonucleotide nucleotidyltransferase (706 aa).

Positions 483 and 489 each coordinate Mg(2+). In terms of domain architecture, KH spans 550–609; the sequence is PRITTIWVKTDKIRDVIGTGGKNIRNITETTGVTVDIEDTGRINIASTSKEACDLAIQMI. The S1 motif domain occupies 619-687; the sequence is GKLYMGIVKK…KNGKVKLSRK (69 aa).

This sequence belongs to the polyribonucleotide nucleotidyltransferase family. The cofactor is Mg(2+).

The protein localises to the cytoplasm. It catalyses the reaction RNA(n+1) + phosphate = RNA(n) + a ribonucleoside 5'-diphosphate. Its function is as follows. Involved in mRNA degradation. Catalyzes the phosphorolysis of single-stranded polyribonucleotides processively in the 3'- to 5'-direction. The polypeptide is Polyribonucleotide nucleotidyltransferase (Pelobacter propionicus (strain DSM 2379 / NBRC 103807 / OttBd1)).